The sequence spans 584 residues: MAIKLLNDNVINKIAAGEVIERPASVVKELLENAIDAASRNIAVKISGAGLDSIEVTDDGEGISMEELPLAFLRHATSKIENEGDLLRIMSMGFRGEALPSIASVSRIDIYSKKEKQEGIHCFIEGGKILDLQYFPGPEGSKIIVSDLFFNTPARKKFLRSPVTEGNNAYELVIKYALARPDIAISFSNEKRQLFRTPGNGSLNDAVIAIFGRDFLEPLIPVKWEGLSLSISGLISPPGVAKMNRKRQLIFVNQRPIRSPLLYRALDEGYRGLLLAREQPLVILQIAVPPDSIDVNVHPQKSEIRFRDEQSIFRSLCGLLRDTLNARDYRLQDNLPQNRSQPFYPAAGRKTAKQKVEEQPVIPFMHNRKADKRVEETGGEPWIPFYPEEQAEGSVSRVYDEFKILGQLWDSYILLEKEQTLNIVDQHAAHERIIYSRLQQFYAASRGEMQMLAFPLLMDLSLRDMELLEKNQEILGELGFDLQQAGPRSIFLRGTPAIIAGQEREVLFEILELLAGGQGINLKNEAIIKMACKKAVKAGTRLDYREMMQIIQELFITDDYKNCPHGRPTIIAWKQADLERMFKR.

The protein belongs to the DNA mismatch repair MutL/HexB family.

In terms of biological role, this protein is involved in the repair of mismatches in DNA. It is required for dam-dependent methyl-directed DNA mismatch repair. May act as a 'molecular matchmaker', a protein that promotes the formation of a stable complex between two or more DNA-binding proteins in an ATP-dependent manner without itself being part of a final effector complex. This is DNA mismatch repair protein MutL from Syntrophomonas wolfei subsp. wolfei (strain DSM 2245B / Goettingen).